The sequence spans 162 residues: Protein A49 (162 aa).

This sequence belongs to the poxviridae A49 protein family.

The polypeptide is Protein A49 (Variola virus (isolate Human/India/Ind3/1967) (VARV)).